The following is a 383-amino-acid chain: Outer membrane protein S2 (383 aa).

Residues 1 to 21 (MKRKVLALVIPALLAAGAAHA) form the signal peptide.

It belongs to the Gram-negative porin family. Homotrimer.

The protein resides in the cell outer membrane. Functionally, forms pores that allow passive diffusion of small molecules across the outer membrane. The chain is Outer membrane protein S2 (ompS2) from Salmonella typhi.